The primary structure comprises 445 residues: Argininosuccinate synthase (445 aa).

ATP-binding positions include A17–S25 and A43. Y99 serves as a coordination point for L-citrulline. ATP contacts are provided by G129 and T131. T131, N135, and D136 together coordinate L-aspartate. Residue N135 coordinates L-citrulline. Residue D136 participates in ATP binding. L-citrulline is bound by residues R139 and S192. D194 is an ATP binding site. Positions 201, 203, and 280 each coordinate L-citrulline.

The protein belongs to the argininosuccinate synthase family. Type 2 subfamily. Homotetramer.

It localises to the cytoplasm. It carries out the reaction L-citrulline + L-aspartate + ATP = 2-(N(omega)-L-arginino)succinate + AMP + diphosphate + H(+). The protein operates within amino-acid biosynthesis; L-arginine biosynthesis; L-arginine from L-ornithine and carbamoyl phosphate: step 2/3. This Burkholderia cenocepacia (strain HI2424) protein is Argininosuccinate synthase.